The primary structure comprises 151 residues: Large ribosomal subunit protein uL15 (151 aa).

Positions Met1–Met57 are disordered. Residues Lys12–Arg23 are compositionally biased toward basic residues. Positions Ile25–Met37 are enriched in gly residues.

It belongs to the universal ribosomal protein uL15 family. In terms of assembly, part of the 50S ribosomal subunit.

In terms of biological role, binds to the 23S rRNA. The protein is Large ribosomal subunit protein uL15 of Synechococcus sp. (strain CC9605).